We begin with the raw amino-acid sequence, 265 residues long: Small ribosomal subunit protein uS3 (265 aa).

Residues 39-107 (VRDFLKKKLK…PVHVNIEEIR (69 aa)) form the KH type-2 domain. The tract at residues 211-265 (NDAPVVEEPQDDRRRRPGRPEGRRREGEGRPGGNRRGGAGAGRRAAPGADAKSGE) is disordered. Basic and acidic residues predominate over residues 221–239 (DDRRRRPGRPEGRRREGEG). Residues 240–251 (RPGGNRRGGAGA) show a composition bias toward gly residues.

Belongs to the universal ribosomal protein uS3 family. In terms of assembly, part of the 30S ribosomal subunit. Forms a tight complex with proteins S10 and S14.

Functionally, binds the lower part of the 30S subunit head. Binds mRNA in the 70S ribosome, positioning it for translation. This chain is Small ribosomal subunit protein uS3, found in Cupriavidus necator (strain ATCC 17699 / DSM 428 / KCTC 22496 / NCIMB 10442 / H16 / Stanier 337) (Ralstonia eutropha).